Here is a 352-residue protein sequence, read N- to C-terminus: Protein RecA (352 aa).

Glycine 67 to threonine 74 contacts ATP.

Belongs to the RecA family.

The protein localises to the cytoplasm. In terms of biological role, can catalyze the hydrolysis of ATP in the presence of single-stranded DNA, the ATP-dependent uptake of single-stranded DNA by duplex DNA, and the ATP-dependent hybridization of homologous single-stranded DNAs. It interacts with LexA causing its activation and leading to its autocatalytic cleavage. In Chlamydia trachomatis serovar L2 (strain ATCC VR-902B / DSM 19102 / 434/Bu), this protein is Protein RecA.